We begin with the raw amino-acid sequence, 81 residues long: MANIKSQKKRVLTNEKSRLANKAFKSEIKTAIKKALNAKSNDEANKTELVNHAVSLVDKGLKKGIFKDNKAAREKSRLMSA.

The protein belongs to the bacterial ribosomal protein bS20 family.

In terms of biological role, binds directly to 16S ribosomal RNA. This is Small ribosomal subunit protein bS20 from Mycoplasma capricolum subsp. capricolum (strain California kid / ATCC 27343 / NCTC 10154).